We begin with the raw amino-acid sequence, 196 residues long: Small ribosomal subunit protein uS4c (196 aa).

The S4 RNA-binding domain occupies 89-149 (MRLDNILFRL…DKQRSKALIQ (61 aa)).

The protein belongs to the universal ribosomal protein uS4 family. In terms of assembly, part of the 30S ribosomal subunit. Contacts protein S5. The interaction surface between S4 and S5 is involved in control of translational fidelity.

Its subcellular location is the plastid. The protein resides in the chloroplast. Its function is as follows. One of the primary rRNA binding proteins, it binds directly to 16S rRNA where it nucleates assembly of the body of the 30S subunit. With S5 and S12 plays an important role in translational accuracy. The protein is Small ribosomal subunit protein uS4c (rps4) of Asparagus maritimus (Sea asparagus).